A 62-amino-acid polypeptide reads, in one-letter code: Photosystem II reaction center protein Z (62 aa).

2 helical membrane passes run 8–28 (TLLA…VLLA) and 41–61 (FSGS…NSFV).

This sequence belongs to the PsbZ family. As to quaternary structure, PSII is composed of 1 copy each of membrane proteins PsbA, PsbB, PsbC, PsbD, PsbE, PsbF, PsbH, PsbI, PsbJ, PsbK, PsbL, PsbM, PsbT, PsbY, PsbZ, Psb30/Ycf12, at least 3 peripheral proteins of the oxygen-evolving complex and a large number of cofactors. It forms dimeric complexes.

It localises to the plastid. The protein resides in the chloroplast thylakoid membrane. Functionally, may control the interaction of photosystem II (PSII) cores with the light-harvesting antenna, regulates electron flow through the 2 photosystem reaction centers. PSII is a light-driven water plastoquinone oxidoreductase, using light energy to abstract electrons from H(2)O, generating a proton gradient subsequently used for ATP formation. The chain is Photosystem II reaction center protein Z from Ostreococcus tauri.